Consider the following 124-residue polypeptide: Small ribosomal subunit protein uS12 (124 aa).

The tract at residues 1–32 (MPTINQLVRKGRRDKTAKVKTAALKGSPQRRG) is disordered. Residue aspartate 89 is modified to 3-methylthioaspartic acid. The interval 104-124 (TQGVKGRKQARSRYGAKKEKS) is disordered. Basic residues predominate over residues 108 to 118 (KGRKQARSRYG).

The protein belongs to the universal ribosomal protein uS12 family. As to quaternary structure, part of the 30S ribosomal subunit. Contacts proteins S8 and S17. May interact with IF1 in the 30S initiation complex.

With S4 and S5 plays an important role in translational accuracy. Its function is as follows. Interacts with and stabilizes bases of the 16S rRNA that are involved in tRNA selection in the A site and with the mRNA backbone. Located at the interface of the 30S and 50S subunits, it traverses the body of the 30S subunit contacting proteins on the other side and probably holding the rRNA structure together. The combined cluster of proteins S8, S12 and S17 appears to hold together the shoulder and platform of the 30S subunit. This Rhodococcus jostii (strain RHA1) protein is Small ribosomal subunit protein uS12.